We begin with the raw amino-acid sequence, 256 residues long: Biosynthetic peptidoglycan transglycosylase (256 aa).

The chain crosses the membrane as a helical span at residues V26–Y48.

Belongs to the glycosyltransferase 51 family.

The protein resides in the cell inner membrane. It carries out the reaction [GlcNAc-(1-&gt;4)-Mur2Ac(oyl-L-Ala-gamma-D-Glu-L-Lys-D-Ala-D-Ala)](n)-di-trans,octa-cis-undecaprenyl diphosphate + beta-D-GlcNAc-(1-&gt;4)-Mur2Ac(oyl-L-Ala-gamma-D-Glu-L-Lys-D-Ala-D-Ala)-di-trans,octa-cis-undecaprenyl diphosphate = [GlcNAc-(1-&gt;4)-Mur2Ac(oyl-L-Ala-gamma-D-Glu-L-Lys-D-Ala-D-Ala)](n+1)-di-trans,octa-cis-undecaprenyl diphosphate + di-trans,octa-cis-undecaprenyl diphosphate + H(+). The protein operates within cell wall biogenesis; peptidoglycan biosynthesis. Its function is as follows. Peptidoglycan polymerase that catalyzes glycan chain elongation from lipid-linked precursors. The protein is Biosynthetic peptidoglycan transglycosylase of Burkholderia pseudomallei (strain K96243).